Reading from the N-terminus, the 925-residue chain is Probable dipeptidyl-aminopeptidase B (925 aa).

The segment at 1–104 (MTPYRDVPPV…RHAQKKGPGM (104 aa)) is disordered. Topologically, residues 1 to 110 (MTPYRDVPPV…GPGMDRGMRR (110 aa)) are cytoplasmic. Low complexity predominate over residues 31–40 (ESGSSVSTTS). Residues 55 to 72 (LSEKQPRGDDNEDALKDE) show a composition bias toward basic and acidic residues. The chain crosses the membrane as a helical; Signal-anchor for type II membrane protein span at residues 111–131 (ALLIAAGLLVSAWVAGLFVYI). The Vacuolar segment spans residues 132–925 (ATKSYKPASA…PKPNGKRRAA (794 aa)). Asn369 carries N-linked (GlcNAc...) asparagine glycosylation. Ser773 (charge relay system) is an active-site residue. A glycan (N-linked (GlcNAc...) asparagine) is linked at Asn832. Active-site charge relay system residues include Asp850 and His883.

Belongs to the peptidase S9B family.

It is found in the vacuole membrane. It catalyses the reaction Release of an N-terminal dipeptide, Xaa-Yaa-|-Zaa-, from a polypeptide, preferentially when Yaa is Pro, provided Zaa is neither Pro nor hydroxyproline.. In terms of biological role, type IV dipeptidyl-peptidase which removes N-terminal dipeptides sequentially from polypeptides having unsubstituted N-termini provided that the penultimate residue is proline. This chain is Probable dipeptidyl-aminopeptidase B (DAPB), found in Chaetomium globosum (strain ATCC 6205 / CBS 148.51 / DSM 1962 / NBRC 6347 / NRRL 1970) (Soil fungus).